Reading from the N-terminus, the 185-residue chain is Putative tyrosine-protein phosphatase OCA1 (185 aa).

The Tyrosine-protein phosphatase domain maps to 18 to 178 (NFCPVEKQLY…TVEIGSGKGS (161 aa)). Cys116 functions as the Phosphocysteine intermediate in the catalytic mechanism.

This sequence belongs to the protein-tyrosine phosphatase family.

Its subcellular location is the cytoplasm. The enzyme catalyses O-phospho-L-tyrosyl-[protein] + H2O = L-tyrosyl-[protein] + phosphate. In terms of biological role, putative tyrosine-protein phosphatase required for protection against superoxide stress. In Meyerozyma guilliermondii (strain ATCC 6260 / CBS 566 / DSM 6381 / JCM 1539 / NBRC 10279 / NRRL Y-324) (Yeast), this protein is Putative tyrosine-protein phosphatase OCA1 (OCA1).